Consider the following 432-residue polypeptide: Adenylosuccinate synthetase (432 aa).

Residues 13–19 (GDEGKGK) and 41–43 (GHT) each bind GTP. D14 (proton acceptor) is an active-site residue. 2 residues coordinate Mg(2+): D14 and G41. IMP is bound by residues 14–17 (DEGK), 39–42 (NAGH), T130, R144, Q225, T240, and R304. The Proton donor role is filled by H42. 300–306 (ATTGRRR) lines the substrate pocket. Residues R306, 332 to 334 (KLD), and 415 to 417 (STG) contribute to the GTP site.

This sequence belongs to the adenylosuccinate synthetase family. In terms of assembly, homodimer. Requires Mg(2+) as cofactor.

The protein localises to the cytoplasm. It catalyses the reaction IMP + L-aspartate + GTP = N(6)-(1,2-dicarboxyethyl)-AMP + GDP + phosphate + 2 H(+). It functions in the pathway purine metabolism; AMP biosynthesis via de novo pathway; AMP from IMP: step 1/2. Its function is as follows. Plays an important role in the de novo pathway of purine nucleotide biosynthesis. Catalyzes the first committed step in the biosynthesis of AMP from IMP. The chain is Adenylosuccinate synthetase from Salmonella paratyphi A (strain AKU_12601).